A 102-amino-acid polypeptide reads, in one-letter code: MAKGQSLQDPFLNALRRERVPVSIYLVNGIKLQGQIESFDQFVILLKNTVSQMVYKHAISTVVPSRPVSHHSNNAGGGTSNNYHHGSNAQGSGAQQDSEETE.

The Sm domain maps to 9–68 (DPFLNALRRERVPVSIYLVNGIKLQGQIESFDQFVILLKNTVSQMVYKHAISTVVPSRPV). The disordered stretch occupies residues 63–102 (VPSRPVSHHSNNAGGGTSNNYHHGSNAQGSGAQQDSEETE). The span at 70 to 96 (HHSNNAGGGTSNNYHHGSNAQGSGAQQ) shows a compositional bias: polar residues.

Belongs to the Hfq family. Homohexamer.

RNA chaperone that binds small regulatory RNA (sRNAs) and mRNAs to facilitate mRNA translational regulation in response to envelope stress, environmental stress and changes in metabolite concentrations. Also binds with high specificity to tRNAs. The chain is RNA-binding protein Hfq from Salmonella arizonae (strain ATCC BAA-731 / CDC346-86 / RSK2980).